Here is a 204-residue protein sequence, read N- to C-terminus: FMN-dependent NADH:quinone oxidoreductase (204 aa).

Residues S10, 16–18 (SIS), and 96–99 (MYNF) each bind FMN.

This sequence belongs to the azoreductase type 1 family. In terms of assembly, homodimer. The cofactor is FMN.

It carries out the reaction 2 a quinone + NADH + H(+) = 2 a 1,4-benzosemiquinone + NAD(+). It catalyses the reaction N,N-dimethyl-1,4-phenylenediamine + anthranilate + 2 NAD(+) = 2-(4-dimethylaminophenyl)diazenylbenzoate + 2 NADH + 2 H(+). Its function is as follows. Quinone reductase that provides resistance to thiol-specific stress caused by electrophilic quinones. In terms of biological role, also exhibits azoreductase activity. Catalyzes the reductive cleavage of the azo bond in aromatic azo compounds to the corresponding amines. The sequence is that of FMN-dependent NADH:quinone oxidoreductase from Herminiimonas arsenicoxydans.